A 270-amino-acid chain; its full sequence is tRNA pseudouridine synthase A (270 aa).

Aspartate 51 serves as the catalytic Nucleophile. Tyrosine 109 is a substrate binding site.

The protein belongs to the tRNA pseudouridine synthase TruA family. As to quaternary structure, homodimer.

The catalysed reaction is uridine(38/39/40) in tRNA = pseudouridine(38/39/40) in tRNA. In terms of biological role, formation of pseudouridine at positions 38, 39 and 40 in the anticodon stem and loop of transfer RNAs. In Burkholderia ambifaria (strain ATCC BAA-244 / DSM 16087 / CCUG 44356 / LMG 19182 / AMMD) (Burkholderia cepacia (strain AMMD)), this protein is tRNA pseudouridine synthase A.